The primary structure comprises 157 residues: Electron transfer flavoprotein regulatory factor 1 homolog (157 aa).

This sequence belongs to the complex I LYR family.

Its subcellular location is the mitochondrion. In Dictyostelium discoideum (Social amoeba), this protein is Electron transfer flavoprotein regulatory factor 1 homolog.